The chain runs to 329 residues: MENTIEALTGRIINGEAITHAEALELSQMEGSALFPLFCVANRIKEHFVGDKVYLCSIINAKSGRCPENCSFCAQSAHHKTDAPVYSLVDEDKMVACAHEAEKNGSSCYGIITSGTSINKGEELTRICRAVKRIRQETGITPSCSLGIIDYETALALKDAGVETYHHNLETARSFFPNVCTTHDYEEDVETVRVARKAGMKVCCGGIFGLGESIPQRVEMALTLRELDVDSVPLNFLNPIPGTRLENAVNITPMECLQTIALFRMILPSKKISVCGGREKNLRDLQSWIFFAGASGTMIGNYLTTTGRAAEEDWQMLKDLNLSAANCCD.

A Radical SAM core domain is found at Phe-48–Arg-278. [4Fe-4S] cluster-binding residues include Cys-66, Cys-70, and Cys-73. The [2Fe-2S] cluster site is built by Ser-143 and Cys-203.

It belongs to the radical SAM superfamily. Biotin synthase family. Homodimer. It depends on [4Fe-4S] cluster as a cofactor. [2Fe-2S] cluster is required as a cofactor.

It catalyses the reaction (4R,5S)-dethiobiotin + (sulfur carrier)-SH + 2 reduced [2Fe-2S]-[ferredoxin] + 2 S-adenosyl-L-methionine = (sulfur carrier)-H + biotin + 2 5'-deoxyadenosine + 2 L-methionine + 2 oxidized [2Fe-2S]-[ferredoxin]. It participates in cofactor biosynthesis; biotin biosynthesis; biotin from 7,8-diaminononanoate: step 2/2. Its function is as follows. Catalyzes the conversion of dethiobiotin (DTB) to biotin by the insertion of a sulfur atom into dethiobiotin via a radical-based mechanism. This is Biotin synthase from Geotalea uraniireducens (strain Rf4) (Geobacter uraniireducens).